Consider the following 104-residue polypeptide: Large ribosomal subunit protein bL21 (104 aa).

This sequence belongs to the bacterial ribosomal protein bL21 family. As to quaternary structure, part of the 50S ribosomal subunit. Contacts protein L20.

Functionally, this protein binds to 23S rRNA in the presence of protein L20. This chain is Large ribosomal subunit protein bL21, found in Elusimicrobium minutum (strain Pei191).